The primary structure comprises 252 residues: Probable endonuclease 4 (252 aa).

His56, His96, Glu129, Asp162, His165, His191, Asp204, His206, and Glu233 together coordinate Zn(2+).

Belongs to the AP endonuclease 2 family. Zn(2+) is required as a cofactor.

The enzyme catalyses Endonucleolytic cleavage to 5'-phosphooligonucleotide end-products.. Endonuclease IV plays a role in DNA repair. It cleaves phosphodiester bonds at apurinic or apyrimidinic (AP) sites, generating a 3'-hydroxyl group and a 5'-terminal sugar phosphate. This is Probable endonuclease 4 from Mycobacterium ulcerans (strain Agy99).